Here is a 259-residue protein sequence, read N- to C-terminus: Secretion system apparatus protein SsaT (259 aa).

A run of 6 helical transmembrane segments spans residues leucine 9–leucine 29, glycine 35–isoleucine 55, valine 78–alanine 98, leucine 127–leucine 147, isoleucine 185–leucine 205, and valine 214–phenylalanine 234.

It belongs to the FliR/MopE/SpaR family.

It is found in the cell membrane. Its function is as follows. Part of a type III secretion system. This is Secretion system apparatus protein SsaT (ssaT) from Salmonella typhimurium (strain LT2 / SGSC1412 / ATCC 700720).